Reading from the N-terminus, the 354-residue chain is Protein RecA (354 aa).

65 to 72 (GPESSGKT) contributes to the ATP binding site.

This sequence belongs to the RecA family.

It is found in the cytoplasm. Functionally, can catalyze the hydrolysis of ATP in the presence of single-stranded DNA, the ATP-dependent uptake of single-stranded DNA by duplex DNA, and the ATP-dependent hybridization of homologous single-stranded DNAs. It interacts with LexA causing its activation and leading to its autocatalytic cleavage. The polypeptide is Protein RecA (Aeromonas hydrophila subsp. hydrophila (strain ATCC 7966 / DSM 30187 / BCRC 13018 / CCUG 14551 / JCM 1027 / KCTC 2358 / NCIMB 9240 / NCTC 8049)).